The primary structure comprises 300 residues: Bifunctional protein FolD 2 (300 aa).

NADP(+)-binding positions include 166 to 168 (GRS), S191, and I232.

Belongs to the tetrahydrofolate dehydrogenase/cyclohydrolase family. Homodimer.

It carries out the reaction (6R)-5,10-methylene-5,6,7,8-tetrahydrofolate + NADP(+) = (6R)-5,10-methenyltetrahydrofolate + NADPH. The catalysed reaction is (6R)-5,10-methenyltetrahydrofolate + H2O = (6R)-10-formyltetrahydrofolate + H(+). Its pathway is one-carbon metabolism; tetrahydrofolate interconversion. Its function is as follows. Catalyzes the oxidation of 5,10-methylenetetrahydrofolate to 5,10-methenyltetrahydrofolate and then the hydrolysis of 5,10-methenyltetrahydrofolate to 10-formyltetrahydrofolate. The sequence is that of Bifunctional protein FolD 2 from Roseobacter denitrificans (strain ATCC 33942 / OCh 114) (Erythrobacter sp. (strain OCh 114)).